Consider the following 338-residue polypeptide: MARSLSQSLTATTQKLKGKKNGGKGKNKPSAKIKKTQKEMLYGILNERNIRQIQFGLNKKFSTWYGSAVYFDPETKRLGCSETKGQLSSVSNSQYWLDTLFVCEYCFKYTDDQTRFVGHVASCPFQYRVPGKIKYKSPEYTIRRVKGSKYQLFCQCLCLFTKLYLDNKSMYFKVDHYEFYIVYETGSTKPMGFFSKDLVSYQQNNLACILIFPPYQRRGLGLLLIEFSYKLSQLEGVISGPEVPLSPFGLIGYLKYWSQILCWHLIEGDLAHYDKVTLEDLSIVTGMRVNDVILTLKHLNCIGENNQIYLQSLNSWLKLHGTKRNWFKLKDEYLLIDD.

The segment covering 1–15 has biased composition (polar residues); it reads MARSLSQSLTATTQK. Positions 1-31 are disordered; that stretch reads MARSLSQSLTATTQKLKGKKNGGKGKNKPSA. Residues 16–31 are compositionally biased toward basic residues; the sequence is LKGKKNGGKGKNKPSA. The region spanning 45-338 is the MYST-type HAT domain; that stretch reads LNERNIRQIQ…LKDEYLLIDD (294 aa). Residues 100 to 126 form a C2HC MYST-type zinc finger; it reads LFVCEYCFKYTDDQTRFVGHVASCPFQ. Lys-168 is subject to N6-acetyllysine; by autocatalysis. Acetyl-CoA contacts are provided by residues 209 to 211 and 216 to 222; these read ILI and QRRGLGL. The active-site Proton donor/acceptor is the Glu-242. Acetyl-CoA is bound by residues Ser-246 and Lys-323.

Belongs to the MYST (SAS/MOZ) family. In terms of assembly, interacts with CAC1. Component of the SAS complex, at least composed of SAS2, SAS4 and SAS5. These three proteins constitute the core of the complex and are sufficient to acetylate histones. SAS4 is essential for HAT activity of the complex, while SAS5 is required for maxiaml HAT activity. Autoacetylation at Lys-168 is required for proper function.

The protein localises to the cytoplasm. It is found in the nucleus. The enzyme catalyses L-lysyl-[protein] + acetyl-CoA = N(6)-acetyl-L-lysyl-[protein] + CoA + H(+). In terms of biological role, histone acetyltransferase (HAT) subunit of the SAS complex, a multiprotein complex that acetylates 'Lys-16' of histone H4 and 'Lys-14' of histone H3. The SAS complex is however unable to acetylate nucleosomal histones. The complex is involved in transcriptional silencing at telomeres and at HML locus. Also involved in rDNA silencing and G0 control. The chain is Histone acetyltransferase SAS2 (SAS2) from Saccharomyces cerevisiae (strain ATCC 204508 / S288c) (Baker's yeast).